Consider the following 343-residue polypeptide: Multidrug resistance protein MdtN (343 aa).

At 1–12 the chain is on the cytoplasmic side; it reads MESTPKKAPRSK. The helical; Signal-anchor for type II membrane protein transmembrane segment at 13–33 threads the bilayer; sequence FPALLVVALALVALVFVIWRV. The Periplasmic segment spans residues 34 to 343; the sequence is DSAPSTNDAY…ASAVANLEPQ (310 aa).

Belongs to the membrane fusion protein (MFP) (TC 8.A.1) family. Could be part of a tripartite efflux system composed of MdtN, MdtO and MdtP.

It localises to the cell inner membrane. Its function is as follows. Could be involved in resistance to puromycin, acriflavine and tetraphenylarsonium chloride. The protein is Multidrug resistance protein MdtN (mdtN) of Escherichia coli O6:H1 (strain CFT073 / ATCC 700928 / UPEC).